Here is a 103-residue protein sequence, read N- to C-terminus: Large ribosomal subunit protein bL21 (103 aa).

Belongs to the bacterial ribosomal protein bL21 family. In terms of assembly, part of the 50S ribosomal subunit. Contacts protein L20.

Its function is as follows. This protein binds to 23S rRNA in the presence of protein L20. This is Large ribosomal subunit protein bL21 from Pectobacterium atrosepticum (strain SCRI 1043 / ATCC BAA-672) (Erwinia carotovora subsp. atroseptica).